A 490-amino-acid polypeptide reads, in one-letter code: MNSSRSVNPRPSFAPRALSLAIALLLGAPAFAANSGEAPKNFGLDVKITGESENDRDLGTAPGGTLNDIGIDLRPWAFGQWGDWSAYFMGQAVAATDTIETDTLQSDTDDGNNSRNDGREPDKSYLAAREFWVDYAGLTAYPGEHLRFGRQRLREDSGQWQDTNIEALNWSFETTLLNAHAGVAQRFSEYRTDLDELAPEDKDRTHVFGDISTQWAPHHRIGVRIHHADDSGHLRRPGEEVDNLDKTYTGQLTWLGIEATGDAYNYRSSMPLNYWASATWLTGDRDNLTTTTVDDRRIATGKQSGDVNAFGVDLGLRWNIDEQWKAGVGYARGSGGGKDGEEQFQQTGLESNRSNFTGTRSRVHRFGEAFRGELSNLQAATLFGSWQLREDYDASLVYHKFWRVDDDSDIGTSGINAALQPGEKDIGQELDLVVTKYFKQGLLPASMSQYVDEPSALIRFRGGLFKPGDAYGPGTDSTMHRAFVDFIWRF.

The N-terminal stretch at 1 to 32 (MNSSRSVNPRPSFAPRALSLAIALLLGAPAFA) is a signal peptide. Composition is skewed to polar residues over residues 102–115 (DTLQSDTDDGNNSR) and 343–355 (QFQQTGLESNRSN). Disordered regions lie at residues 102-121 (DTLQSDTDDGNNSRNDGREP) and 331-355 (ARGSGGGKDGEEQFQQTGLESNRSN).

Belongs to the AlgE family.

The protein resides in the cell outer membrane. It participates in glycan biosynthesis; alginate biosynthesis. Has non-porin-like, channel-forming properties and probably functions as an alginate permeability pore. This is Alginate production protein AlgE (algE) from Pseudomonas aeruginosa (strain ATCC 15692 / DSM 22644 / CIP 104116 / JCM 14847 / LMG 12228 / 1C / PRS 101 / PAO1).